Consider the following 663-residue polypeptide: 4-hydroxy-3-methylbut-2-en-1-yl diphosphate synthase (flavodoxin) (663 aa).

[4Fe-4S] cluster contacts are provided by C568, C571, C602, and E609.

Belongs to the IspG family. The cofactor is [4Fe-4S] cluster.

The catalysed reaction is (2E)-4-hydroxy-3-methylbut-2-enyl diphosphate + oxidized [flavodoxin] + H2O + 2 H(+) = 2-C-methyl-D-erythritol 2,4-cyclic diphosphate + reduced [flavodoxin]. The protein operates within isoprenoid biosynthesis; isopentenyl diphosphate biosynthesis via DXP pathway; isopentenyl diphosphate from 1-deoxy-D-xylulose 5-phosphate: step 5/6. Functionally, converts 2C-methyl-D-erythritol 2,4-cyclodiphosphate (ME-2,4cPP) into 1-hydroxy-2-methyl-2-(E)-butenyl 4-diphosphate. In Leptospira interrogans serogroup Icterohaemorrhagiae serovar copenhageni (strain Fiocruz L1-130), this protein is 4-hydroxy-3-methylbut-2-en-1-yl diphosphate synthase (flavodoxin).